The sequence spans 360 residues: Phospho-N-acetylmuramoyl-pentapeptide-transferase (360 aa).

Helical transmembrane passes span 26-46, 73-93, 94-114, 132-152, 168-188, 199-219, 239-259, 263-283, 288-308, and 338-358; these read AVLSLLTALLLSLWIGPKMIL, TMGGIMILATITASSLLWGDL, SNPYIWCSLFVLLGYGAIGFV, WKYFWLSVVAFIAVFTMYMIG, IMPQLGLFYIVLAYFVIVGTS, GLAIMPTVFVAGAFAIIAWAT, LVIFCTAIVGAGLGFLWFNTY, VFMGDVGSLALGGALGVIAVL, FLLVIMGGVFVMETVSVILQV, and VIIRFWIISLMLVLLGLVTLK.

This sequence belongs to the glycosyltransferase 4 family. MraY subfamily. Mg(2+) serves as cofactor.

Its subcellular location is the cell inner membrane. The catalysed reaction is UDP-N-acetyl-alpha-D-muramoyl-L-alanyl-gamma-D-glutamyl-meso-2,6-diaminopimeloyl-D-alanyl-D-alanine + di-trans,octa-cis-undecaprenyl phosphate = di-trans,octa-cis-undecaprenyl diphospho-N-acetyl-alpha-D-muramoyl-L-alanyl-D-glutamyl-meso-2,6-diaminopimeloyl-D-alanyl-D-alanine + UMP. It functions in the pathway cell wall biogenesis; peptidoglycan biosynthesis. Catalyzes the initial step of the lipid cycle reactions in the biosynthesis of the cell wall peptidoglycan: transfers peptidoglycan precursor phospho-MurNAc-pentapeptide from UDP-MurNAc-pentapeptide onto the lipid carrier undecaprenyl phosphate, yielding undecaprenyl-pyrophosphoryl-MurNAc-pentapeptide, known as lipid I. The chain is Phospho-N-acetylmuramoyl-pentapeptide-transferase from Actinobacillus succinogenes (strain ATCC 55618 / DSM 22257 / CCUG 43843 / 130Z).